The chain runs to 418 residues: Sonic hedgehog protein (418 aa).

The N-terminal stretch at M1–A23 is a signal peptide. The N-palmitoyl cysteine moiety is linked to residue C24. The Cardin-Weintraub signature appears at R32 to K38. E89, E90, D95, T125, E126, D129, and D131 together coordinate Ca(2+). The Zn(2+) site is built by H140, D147, and H182. G197 is lipidated: Cholesterol glycine ester.

The protein belongs to the hedgehog family. As to quaternary structure, interacts with HHATL/GUP1 which negatively regulates HHAT-mediated palmitoylation of the SHH N-terminus. Interacts with BOC and CDON. Interacts with HHIP. Interacts with DISP1 via its cholesterol anchor. Interacts with SCUBE2. In terms of assembly, multimer. The C-terminal domain displays an autoproteolysis activity and a cholesterol transferase activity. Both activities result in the cleavage of the full-length protein and covalent attachment of a cholesterol moiety to the C-terminal of the newly generated N-terminal fragment (ShhN). Cholesterylation is required for the sonic hedgehog protein N-product targeting to lipid rafts and multimerization. ShhN is the active species in both local and long-range signaling, whereas the C-product (ShhC) is degraded in the reticulum endoplasmic. In terms of processing, N-palmitoylation by HHAT of ShhN is required for sonic hedgehog protein N-product multimerization and full activity. It is a prerequisite for the membrane-proximal positioning and the subsequent shedding of this N-terminal peptide. Post-translationally, the lipidated N- and C-terminal peptides of ShhNp can be cleaved (shedding). The N-terminal palmitoylated peptide is cleaved at the Cardin-Weintraub (CW) motif site. The cleavage reduced the interactions with heparan sulfate. The cleavage is enhanced by SCUBE2. As to expression, expressed in the ventral midline of the neural tube and brain. Also found in the notochord and in developing fin bud. In the developing brain, expression occurs in domains that include a discrete region in the floor of the diencephalon.

It localises to the endoplasmic reticulum membrane. The protein resides in the golgi apparatus membrane. It is found in the cell membrane. It catalyses the reaction glycyl-L-cysteinyl-[protein] + cholesterol + H(+) = [protein]-C-terminal glycyl cholesterol ester + N-terminal L-cysteinyl-[protein]. The C-terminal part of the sonic hedgehog protein precursor displays an autoproteolysis and a cholesterol transferase activity. Both activities result in the cleavage of the full-length protein into two parts (ShhN and ShhC) followed by the covalent attachment of a cholesterol moiety to the C-terminal of the newly generated ShhN. Both activities occur in the endoplasmic reticulum. Once cleaved, ShhC is degraded in the endoplasmic reticulum. Functionally, the dually lipidated sonic hedgehog protein N-product (ShhNp) is a morphogen which is essential for a variety of patterning events during development. Involved in dorso-ventral patterning of the brain and in early patterning of the developing eyes. Binds to the patched (PTCH1) receptor, which functions in association with smoothened (SMO), to activate the transcription of target genes. In the absence of SHH, PTCH1 represses the constitutive signaling activity of SMO. The polypeptide is Sonic hedgehog protein (shha) (Danio rerio (Zebrafish)).